We begin with the raw amino-acid sequence, 402 residues long: mRNA-capping enzyme subunit alpha (402 aa).

Lys-66 functions as the N6-GMP-lysine intermediate in the catalytic mechanism.

The protein belongs to the eukaryotic GTase family. Heterodimer. The mRNA-capping enzyme is composed of two separate chains alpha and beta, respectively a mRNA guanylyltransferase and an mRNA 5'-triphosphate monophosphatase.

It is found in the nucleus. The enzyme catalyses a 5'-end diphospho-ribonucleoside in mRNA + GTP + H(+) = a 5'-end (5'-triphosphoguanosine)-ribonucleoside in mRNA + diphosphate. Functionally, second step of mRNA capping. Transfer of the GMP moiety of GTP to the 5'-end of RNA via an enzyme-GMP covalent reaction intermediate. In Neurospora crassa (strain ATCC 24698 / 74-OR23-1A / CBS 708.71 / DSM 1257 / FGSC 987), this protein is mRNA-capping enzyme subunit alpha (rnp-2).